Reading from the N-terminus, the 184-residue chain is MISNVTEALSNFTRCYVDLWQKETGAPPASRELYGVPSPCITQTGDNIVYWLPQPFPLEEKLNSVEVALDIQLQPAIHDFYTSQLAGDMTVTFEGQRLSLIQVWSEDDFIRLQENLIGHLVTQKRLKLSPTAFIATMESDDMGIISLCNLTGEVILEQFGSHKRERLFTDLVGFLGAIEPVFMR.

It belongs to the Syd family.

Its subcellular location is the cell inner membrane. Functionally, interacts with the SecY protein in vivo. May bind preferentially to an uncomplexed state of SecY, thus functioning either as a chelating agent for excess SecY in the cell or as a regulatory factor that negatively controls the translocase function. The protein is Protein Syd of Photorhabdus laumondii subsp. laumondii (strain DSM 15139 / CIP 105565 / TT01) (Photorhabdus luminescens subsp. laumondii).